Here is a 234-residue protein sequence, read N- to C-terminus: MKADAKQITHLLKPLRLLLLGAPGSGKGTQTSRLLKQIPQLSSISSGDILRQEIKSESTLGREATTYIAQGKLLPDDLITRLITFRLSALGWLKPSAMWLLDGFPRTTAQASALDELLKQHDASLNLVVELDVPESTILERIENRYVHVPSGRVYNLQYNPPKVPGLDDITGEPLTKRLDDTAEVFKKRLEEYKKTNEPLKDYYKKSGIFGTVSGETSDIIFPKLLNLITSKFG.

24–29 (GSGKGT) is a binding site for GTP. An NMP region spans residues 45–74 (SSGDILRQEIKSESTLGREATTYIAQGKLL). Residues Ser-46, Arg-51, 72–74 (KLL), 103–106 (GFPR), and Gln-110 contribute to the AMP site. An LID region spans residues 144–181 (NRYVHVPSGRVYNLQYNPPKVPGLDDITGEPLTKRLDD). GTP-binding positions include Arg-145 and 154–155 (VY). AMP-binding residues include Arg-178 and Arg-189. Ser-218 is a GTP binding site.

Belongs to the adenylate kinase family. AK3 subfamily. Monomer.

The protein resides in the mitochondrion matrix. It catalyses the reaction a ribonucleoside 5'-triphosphate + AMP = a ribonucleoside 5'-diphosphate + ADP. In terms of biological role, involved in maintaining the homeostasis of cellular nucleotides by catalyzing the interconversion of nucleoside phosphates. Has GTP:AMP phosphotransferase and ITP:AMP phosphotransferase activities. Does not accept ATP as phosphate donor. This chain is GTP:AMP phosphotransferase, mitochondrial, found in Saccharomyces cerevisiae (Baker's yeast).